Reading from the N-terminus, the 218-residue chain is ATP synthase subunit a (218 aa).

5 helical membrane passes run 17 to 37 (IYST…GIFL), 75 to 95 (YLPL…SWFI), 104 to 124 (DLST…IFGI), 162 to 184 (LFGN…PFLL), and 196 to 216 (GTIQ…NFVH).

It belongs to the ATPase A chain family. As to quaternary structure, F-type ATPases have 2 components, CF(1) - the catalytic core - and CF(0) - the membrane proton channel. CF(1) has five subunits: alpha(3), beta(3), gamma(1), delta(1), epsilon(1). CF(0) has three main subunits: a(1), b(2) and c(9-12). The alpha and beta chains form an alternating ring which encloses part of the gamma chain. CF(1) is attached to CF(0) by a central stalk formed by the gamma and epsilon chains, while a peripheral stalk is formed by the delta and b chains. In this bacterium the a and b subunits are transcribed but do not seem to be translated, thus the ATP synthase consists of the alpha, beta, gamma, delta, epsilon and c subunits.

The protein resides in the cell membrane. Its function is as follows. Key component of the proton channel; it plays a direct role in the translocation of protons across the membrane. This Moorella thermoacetica (strain ATCC 39073 / JCM 9320) protein is ATP synthase subunit a.